Here is a 93-residue protein sequence, read N- to C-terminus: Small ribosomal subunit protein uS17 (93 aa).

It belongs to the universal ribosomal protein uS17 family. Part of the 30S ribosomal subunit.

In terms of biological role, one of the primary rRNA binding proteins, it binds specifically to the 5'-end of 16S ribosomal RNA. This is Small ribosomal subunit protein uS17 from Corynebacterium kroppenstedtii (strain DSM 44385 / JCM 11950 / CIP 105744 / CCUG 35717).